Reading from the N-terminus, the 331-residue chain is Uroporphyrinogen decarboxylase (331 aa).

Substrate-binding positions include 22–26, Asp71, Tyr145, Ser199, and His308; that span reads RQAGR.

This sequence belongs to the uroporphyrinogen decarboxylase family. Homodimer.

The protein localises to the cytoplasm. The enzyme catalyses uroporphyrinogen III + 4 H(+) = coproporphyrinogen III + 4 CO2. It participates in porphyrin-containing compound metabolism; protoporphyrin-IX biosynthesis; coproporphyrinogen-III from 5-aminolevulinate: step 4/4. Its function is as follows. Catalyzes the decarboxylation of four acetate groups of uroporphyrinogen-III to yield coproporphyrinogen-III. The sequence is that of Uroporphyrinogen decarboxylase from Picrophilus torridus (strain ATCC 700027 / DSM 9790 / JCM 10055 / NBRC 100828 / KAW 2/3).